Here is a 120-residue protein sequence, read N- to C-terminus: Secreted effector PIT2 (120 aa).

An N-terminal signal peptide occupies residues 1-25 (MLFRSAFVLLIVAFASACLVQHVQA). The interval 46–59 (KLNRRWWFGFTGSL) is PID14 protease inhibitor domain.

Interacts with host cysteine proteases CP1A, CP1B, XCP2 and CP2. In terms of processing, cleaved by host target papain-like cysteine proteases (PLCPs) to release the embedded inhibitor peptide PID14.

The protein resides in the secreted. Functionally, secreted effector required for virulence. Functions as an inhibitor of a set of apoplastic maize papain-like cysteine proteases (PLCPs) including CP1A, CP1B, XCP2 and CP2, whose activity is directly linked with salicylic-acid-associated plant defenses. Acts as a substrate mimicking molecule for apoplastic PLCPs and its processing releases the embedded inhibitor peptide PID14, which in turn blocks PLCPs to modulate host immunity. In Mycosarcoma maydis (Corn smut fungus), this protein is Secreted effector PIT2.